A 177-amino-acid chain; its full sequence is R-phycoerythrin beta chain (177 aa).

2 residues coordinate (2R,3E)-phycoerythrobilin: Asn35 and Asp39. Cys50, Asp54, and Cys61 together coordinate phycourobilin. Residues Asn72, 77 to 78 (RR), Cys82, and 84 to 85 (RD) contribute to the (2R,3E)-phycoerythrobilin site. At Asn72 the chain carries N4-methylasparagine. 147 to 148 (SG) provides a ligand contact to phycourobilin. Residue Cys158 coordinates (2R,3E)-phycoerythrobilin.

Belongs to the phycobiliprotein family. Heterododecamer of 6 alpha and 6 beta chains. The basic functional unit of phycobiliproteins is a ring-shaped hexamer formed from two back-to-back trimers contacting via the alpha chain subunits. The trimers are composed of alpha/beta subunit heterodimers arranged around a three-fold axis of symmetry. The phycoerythrins also contain a gamma subunit which is located in the center of the hexamer. Post-translationally, contains two covalently linked phycoerythrobilin chromophores and one covalently linked phycourobilin chromophore.

It localises to the plastid. The protein resides in the chloroplast thylakoid membrane. Its function is as follows. Light-harvesting photosynthetic tetrapyrrole chromophore-protein from the phycobiliprotein complex. The sequence is that of R-phycoerythrin beta chain (cpeB) from Griffithsia monilis (Red alga).